The primary structure comprises 302 residues: MSNRYSDFKTQLQGSMVALVTPMKANGEVDYPRLADLIDWQIEQGTHCLVAVGTTGESATLSMQEHSDVIHFFVKHVNGRVPVIAGTGANNTQEAIHLTSEAKAAGADCALLVAPYYNKPTQEGLYQHYKAISEAVDMPQMLYNVPGRTVVDIAQETVERLADFDNIVAIKDATGSVERGKLLIDALGDRIVVLSGDDGTALELMKHGAKGNISVTANIVPKAMSDVFSAALKGDFETAKKVHDSIEPLHKLMFVESSPIPVKYALNKMGKIEKGIRLPMVWLNEKFHDQVDAGLRAAGLID.

Threonine 55 is a pyruvate binding site. Tyrosine 143 functions as the Proton donor/acceptor in the catalytic mechanism. The Schiff-base intermediate with substrate role is filled by lysine 171. Isoleucine 213 provides a ligand contact to pyruvate.

Belongs to the DapA family. In terms of assembly, homotetramer; dimer of dimers.

It localises to the cytoplasm. The enzyme catalyses L-aspartate 4-semialdehyde + pyruvate = (2S,4S)-4-hydroxy-2,3,4,5-tetrahydrodipicolinate + H2O + H(+). Its pathway is amino-acid biosynthesis; L-lysine biosynthesis via DAP pathway; (S)-tetrahydrodipicolinate from L-aspartate: step 3/4. Catalyzes the condensation of (S)-aspartate-beta-semialdehyde [(S)-ASA] and pyruvate to 4-hydroxy-tetrahydrodipicolinate (HTPA). The protein is 4-hydroxy-tetrahydrodipicolinate synthase of Psychrobacter sp. (strain PRwf-1).